Reading from the N-terminus, the 98-residue chain is Large ribosomal subunit protein uL23 (98 aa).

The protein belongs to the universal ribosomal protein uL23 family. As to quaternary structure, part of the 50S ribosomal subunit. Contacts protein L29, and trigger factor when it is bound to the ribosome.

Functionally, one of the early assembly proteins it binds 23S rRNA. One of the proteins that surrounds the polypeptide exit tunnel on the outside of the ribosome. Forms the main docking site for trigger factor binding to the ribosome. The sequence is that of Large ribosomal subunit protein uL23 from Hydrogenovibrio crunogenus (strain DSM 25203 / XCL-2) (Thiomicrospira crunogena).